The primary structure comprises 351 residues: Glycerol-1-phosphate dehydrogenase [NAD(P)+] (351 aa).

NAD(+) contacts are provided by residues 97–101 and 119–122; these read GKTID and TAPS. A substrate-binding site is contributed by D124. Residue S128 participates in NAD(+) binding. D171 lines the substrate pocket. Residues D171 and H251 each contribute to the Zn(2+) site. H255 provides a ligand contact to substrate. Zn(2+) is bound at residue H267.

Belongs to the glycerol-1-phosphate dehydrogenase family. In terms of assembly, homodimer. Requires Zn(2+) as cofactor.

Its subcellular location is the cytoplasm. The enzyme catalyses sn-glycerol 1-phosphate + NAD(+) = dihydroxyacetone phosphate + NADH + H(+). It carries out the reaction sn-glycerol 1-phosphate + NADP(+) = dihydroxyacetone phosphate + NADPH + H(+). The protein operates within membrane lipid metabolism; glycerophospholipid metabolism. Its function is as follows. Catalyzes the NAD(P)H-dependent reduction of dihydroxyacetonephosphate (DHAP or glycerone phosphate) to glycerol 1-phosphate (G1P). The G1P thus generated is used as the glycerophosphate backbone of phospholipids in the cellular membranes of Archaea. This is Glycerol-1-phosphate dehydrogenase [NAD(P)+] from Metallosphaera sedula (strain ATCC 51363 / DSM 5348 / JCM 9185 / NBRC 15509 / TH2).